A 157-amino-acid polypeptide reads, in one-letter code: Transcription elongation factor GreA (157 aa).

Residues 13–75 (RARLEAELEE…EIKSILARAQ (63 aa)) adopt a coiled-coil conformation. The tract at residues 113–142 (EAKPSEGKISNESPIGSALLGKRPRQKVTV) is disordered.

It belongs to the GreA/GreB family.

Its function is as follows. Necessary for efficient RNA polymerase transcription elongation past template-encoded arresting sites. The arresting sites in DNA have the property of trapping a certain fraction of elongating RNA polymerases that pass through, resulting in locked ternary complexes. Cleavage of the nascent transcript by cleavage factors such as GreA or GreB allows the resumption of elongation from the new 3'terminus. GreA releases sequences of 2 to 3 nucleotides. The sequence is that of Transcription elongation factor GreA from Roseiflexus sp. (strain RS-1).